Reading from the N-terminus, the 216-residue chain is Large ribosomal subunit protein uL1 (216 aa).

This sequence belongs to the universal ribosomal protein uL1 family.

This Oryza sativa subsp. indica (Rice) protein is Large ribosomal subunit protein uL1.